A 316-amino-acid polypeptide reads, in one-letter code: Retinol dehydrogenase 7 (316 aa).

33–57 (FITGCDSGFGNLLARQLDRRGMRVL) is an NADP(+) binding site. Substrate is bound at residue serine 163. Residue tyrosine 175 is the Proton acceptor of the active site.

It belongs to the short-chain dehydrogenases/reductases (SDR) family. Highly expressed in liver. Also expressed in lung, eye, kidney, and brain.

The protein localises to the microsome. Its subcellular location is the endoplasmic reticulum. The enzyme catalyses all-trans-retinol--[retinol-binding protein] + NAD(+) = all-trans-retinal--[retinol-binding protein] + NADH + H(+). The protein operates within cofactor metabolism; retinol metabolism. In terms of biological role, acts on androgens and retinols, i.e. has steroid 3-alpha- and 17-beta-dehydrogenase and cis/trans-retinol catalytic activities. The polypeptide is Retinol dehydrogenase 7 (Rdh7) (Mus musculus (Mouse)).